The following is a 377-amino-acid chain: Nitric oxide reductase FlRd-NAD(+) reductase (377 aa).

The protein belongs to the FAD-dependent oxidoreductase family. It depends on FAD as a cofactor.

The protein localises to the cytoplasm. It carries out the reaction 2 reduced [nitric oxide reductase rubredoxin domain] + NAD(+) + H(+) = 2 oxidized [nitric oxide reductase rubredoxin domain] + NADH. It functions in the pathway nitrogen metabolism; nitric oxide reduction. Its function is as follows. One of at least two accessory proteins for anaerobic nitric oxide (NO) reductase. Reduces the rubredoxin moiety of NO reductase. This is Nitric oxide reductase FlRd-NAD(+) reductase from Salmonella enteritidis PT4 (strain P125109).